A 361-amino-acid chain; its full sequence is Probable mannose-1-phosphate guanylyltransferase 1 (361 aa).

GDP-alpha-D-mannose contacts are provided by Leu6 and Val7. The diphosphate site is built by Gly9, Gly11, Thr12, Arg13, and Lys23. GDP-alpha-D-mannose is bound by residues Gly85, Asn109, Asp111, Gly146, and Asn173.

This sequence belongs to the transferase hexapeptide repeat family.

It catalyses the reaction alpha-D-mannose 1-phosphate + GTP + H(+) = GDP-alpha-D-mannose + diphosphate. Its pathway is nucleotide-sugar biosynthesis; GDP-alpha-D-mannose biosynthesis; GDP-alpha-D-mannose from alpha-D-mannose 1-phosphate (GTP route): step 1/1. Its function is as follows. Catalyzes a reaction of the Smirnoff-Wheeler pathway, the major route to ascorbate biosynthesis in plants. The polypeptide is Probable mannose-1-phosphate guanylyltransferase 1 (Oryza sativa subsp. japonica (Rice)).